A 279-amino-acid chain; its full sequence is Very long chain fatty acid elongase 1 (279 aa).

M1 carries the post-translational modification N-acetylmethionine. 7 helical membrane passes run 23–43 (PLMGSPLLMTSILLTYVYFVL), 61–81 (FMIVYNFSLVALSLYIVYEFL), 110–130 (VAWLFLFSKFIELMDTVIFIL), 137–154 (VTFLHVFHHSVLPWSWWW), 176–196 (VIMYLYYGLSAFGPVAQPYLW), 201–221 (MTAIQLIQFVLVSLHISQYYF), and 231–251 (VIIHLIWMYGTIFFMLFSNFW). Positions 275–279 (KVKAN) match the Di-lysine motif motif.

Belongs to the ELO family. ELOVL1 subfamily. As to quaternary structure, interacts with LASS2 and HSD17B12. Interacts with TECR. As to expression, ubiquitous.

The protein localises to the endoplasmic reticulum membrane. It catalyses the reaction a very-long-chain acyl-CoA + malonyl-CoA + H(+) = a very-long-chain 3-oxoacyl-CoA + CO2 + CoA. The catalysed reaction is eicosanoyl-CoA + malonyl-CoA + H(+) = 3-oxodocosanoyl-CoA + CO2 + CoA. The enzyme catalyses (11Z)-eicosenoyl-CoA + malonyl-CoA + H(+) = 3-oxo-(13Z)-docosenoyl-CoA + CO2 + CoA. It carries out the reaction docosanoyl-CoA + malonyl-CoA + H(+) = 3-oxotetracosanoyl-CoA + CO2 + CoA. It catalyses the reaction (13Z)-docosenoyl-CoA + malonyl-CoA + H(+) = 3-oxo-(15Z)-tetracosenoyl-CoA + CO2 + CoA. The catalysed reaction is tetracosanoyl-CoA + malonyl-CoA + H(+) = 3-oxohexacosanoyl-CoA + CO2 + CoA. The enzyme catalyses hexacosanoyl-CoA + malonyl-CoA + H(+) = 3-oxooctacosanyol-CoA + CO2 + CoA. It carries out the reaction octadecanoyl-CoA + malonyl-CoA + H(+) = 3-oxoeicosanoyl-CoA + CO2 + CoA. It participates in lipid metabolism; fatty acid biosynthesis. Its function is as follows. Catalyzes the first and rate-limiting reaction of the four reactions that constitute the long-chain fatty acids elongation cycle. This endoplasmic reticulum-bound enzymatic process allows the addition of 2 carbons to the chain of long- and very long-chain fatty acids (VLCFAs) per cycle. Condensing enzyme that exhibits activity toward saturated and monounsaturated acyl-CoA substrates, with the highest activity towards C22:0 acyl-CoA. May participate in the production of both saturated and monounsaturated VLCFAs of different chain lengths that are involved in multiple biological processes as precursors of membrane lipids and lipid mediators. Important for saturated C24:0 and monounsaturated C24:1 sphingolipid synthesis. Indirectly inhibits RPE65 via production of VLCFAs. The chain is Very long chain fatty acid elongase 1 from Homo sapiens (Human).